A 128-amino-acid polypeptide reads, in one-letter code: Large ribosomal subunit protein bL19 (128 aa).

This sequence belongs to the bacterial ribosomal protein bL19 family.

This protein is located at the 30S-50S ribosomal subunit interface and may play a role in the structure and function of the aminoacyl-tRNA binding site. The polypeptide is Large ribosomal subunit protein bL19 (Bradyrhizobium sp. (strain ORS 278)).